The chain runs to 462 residues: Cysteine--tRNA ligase (462 aa).

C28 provides a ligand contact to Zn(2+). Positions 30-40 match the 'HIGH' region motif; the sequence is MTVYDYCHLGH. C209, H234, and E238 together coordinate Zn(2+). A 'KMSKS' region motif is present at residues 266–270; that stretch reads KMAKS. K269 lines the ATP pocket.

This sequence belongs to the class-I aminoacyl-tRNA synthetase family. As to quaternary structure, monomer. Zn(2+) is required as a cofactor.

It localises to the cytoplasm. It catalyses the reaction tRNA(Cys) + L-cysteine + ATP = L-cysteinyl-tRNA(Cys) + AMP + diphosphate. The sequence is that of Cysteine--tRNA ligase from Alkalilimnicola ehrlichii (strain ATCC BAA-1101 / DSM 17681 / MLHE-1).